Consider the following 602-residue polypeptide: Prostaglandin G/H synthase 1 (602 aa).

The N-terminal stretch at 1–26 (MSRRSLSLWFPLLLLLLLPPTPSVLL) is a signal peptide. The region spanning 34 to 72 (PVNPCCYYPCQNQGVCVRFGLDNYQCDCTRTGYSGPNCT) is the EGF-like domain. 4 disulfide bridges follow: cysteine 38–cysteine 49, cysteine 39–cysteine 161, cysteine 43–cysteine 59, and cysteine 61–cysteine 71. N-linked (GlcNAc...) asparagine glycans are attached at residues asparagine 70, asparagine 106, and asparagine 146. Histidine 209 serves as the catalytic Proton acceptor. The active-site For cyclooxygenase activity is tyrosine 387. Residue histidine 390 participates in heme b binding. Cysteines 571 and 577 form a disulfide.

It belongs to the prostaglandin G/H synthase family. Homodimer. It depends on heme b as a cofactor.

It is found in the microsome membrane. The protein resides in the endoplasmic reticulum membrane. The catalysed reaction is (5Z,8Z,11Z,14Z)-eicosatetraenoate + AH2 + 2 O2 = prostaglandin H2 + A + H2O. It carries out the reaction (5Z,8Z,11Z,14Z)-eicosatetraenoate + 2 O2 = prostaglandin G2. It catalyses the reaction prostaglandin G2 + AH2 = prostaglandin H2 + A + H2O. The enzyme catalyses (9Z,12Z)-octadecadienoate + AH2 + O2 = (9R)-hydroxy-(10E,12Z)-octadecadienoate + A + H2O. The catalysed reaction is (9Z,12Z)-octadecadienoate + AH2 + O2 = (9S)-hydroxy-(10E,12Z)-octadecadienoate + A + H2O. It carries out the reaction (9Z,12Z)-octadecadienoate + AH2 + O2 = (13S)-hydroxy-(9Z,11E)-octadecadienoate + A + H2O. It catalyses the reaction (9Z,12Z)-octadecadienoate + AH2 + O2 = (13R)-hydroxy-(9Z,11E)-octadecadienoate + A + H2O. It participates in lipid metabolism; prostaglandin biosynthesis. Its activity is regulated as follows. The cyclooxygenase activity is inhibited by nonsteroidal anti-inflammatory drugs (NSAIDs) including ibuprofen, flurbiprofen, ketoprofen, naproxen, flurbiprofen, anirolac, fenclofenac and diclofenac. In terms of biological role, dual cyclooxygenase and peroxidase that plays an important role in the biosynthesis pathway of prostanoids, a class of C20 oxylipins mainly derived from arachidonate ((5Z,8Z,11Z,14Z)-eicosatetraenoate, AA, C20:4(n-6)), with a particular role in the inflammatory response. The cyclooxygenase activity oxygenates AA to the hydroperoxy endoperoxide prostaglandin G2 (PGG2), and the peroxidase activity reduces PGG2 to the hydroxy endoperoxide prostaglandin H2 (PGH2), the precursor of all 2-series prostaglandins and thromboxanes. This complex transformation is initiated by abstraction of hydrogen at carbon 13 (with S-stereochemistry), followed by insertion of molecular O2 to form the endoperoxide bridge between carbon 9 and 11 that defines prostaglandins. The insertion of a second molecule of O2 (bis-oxygenase activity) yields a hydroperoxy group in PGG2 that is then reduced to PGH2 by two electrons. Involved in the constitutive production of prostanoids in particular in the stomach and platelets. In gastric epithelial cells, it is a key step in the generation of prostaglandins, such as prostaglandin E2 (PGE2), which plays an important role in cytoprotection. In platelets, it is involved in the generation of thromboxane A2 (TXA2), which promotes platelet activation and aggregation, vasoconstriction and proliferation of vascular smooth muscle cells. Can also use linoleate (LA, (9Z,12Z)-octadecadienoate, C18:2(n-6)) as substrate and produce hydroxyoctadecadienoates (HODEs) in a regio- and stereospecific manner, being (9R)-HODE ((9R)-hydroxy-(10E,12Z)-octadecadienoate) and (13S)-HODE ((13S)-hydroxy-(9Z,11E)-octadecadienoate) its major products. This Mus musculus (Mouse) protein is Prostaglandin G/H synthase 1.